We begin with the raw amino-acid sequence, 418 residues long: Tyrosine--tRNA ligase (418 aa).

Tyr-34 lines the L-tyrosine pocket. The 'HIGH' region motif lies at 39–48 (PTADSLHLGH). Residues Tyr-169 and Gln-173 each coordinate L-tyrosine. The 'KMSKS' region motif lies at 229–233 (KFGKS). Residue Lys-232 participates in ATP binding. One can recognise an S4 RNA-binding domain in the interval 352-418 (LNIVDMLVTA…GKKKYAVLTY (67 aa)).

The protein belongs to the class-I aminoacyl-tRNA synthetase family. TyrS type 1 subfamily. As to quaternary structure, homodimer.

It is found in the cytoplasm. The catalysed reaction is tRNA(Tyr) + L-tyrosine + ATP = L-tyrosyl-tRNA(Tyr) + AMP + diphosphate + H(+). Catalyzes the attachment of tyrosine to tRNA(Tyr) in a two-step reaction: tyrosine is first activated by ATP to form Tyr-AMP and then transferred to the acceptor end of tRNA(Tyr). In Streptococcus equi subsp. equi (strain 4047), this protein is Tyrosine--tRNA ligase.